A 689-amino-acid chain; its full sequence is MADPASYKPARQDIPTNPGVYRFRDEHGRVIYVGKAKNLRNRVSSYFAPLHQLAPKTRAMVTTAAAVQWTVVGSEFESLQLEYTWIKEFAPRFNIAYRDDKSYPYLAVTMSEDVPRAMVTRGEKKPGNRYFGPYSQAWAIRDTLDALLRVFPVRTCTTGVYQRAERSGRPCLLGYIDKCSAPCVGNISQEEHRELADDLCRFMAGHAKPYIRELTRQMNEAAECMDFETAAARRDDVGALERVFERNTVVLTDSTDADFFAIAEDELEAAVQVFHVRGGRIRGQRGWITEKVEDVTTAQLMTNLLQQVYGEAQSGLAPAASGRRRTARHGSEDVVGQHRRTSELAYRQDTIPRAVHVSVLPDEADEIRAWLSELRGSQVTVQRPQRGDKAQLLETVAENARQALTLHKSRRAGDLTTRSASLQQLQEALGLPDALMRIECYDISHVQGTNVVASMVVFEDGLPRKSEYRKFSITGDAARDDTASMYDVIHRRFSRHVEQQRRAAEKGVSTGEVAADDDEGTTRAFAYPPNLVIVDGGPPQVAAAQRALDDLRVTDVHVVGLAKRLEEVWVPDDEFPVILPRASEGLFLMQRVRDEAHRFAITFHRQKRSKAMTVSALDEVPGLGPAKQKALLKHFGSVKKLRAATAEQILEVKGFGPALAVKVAQALGGEAAASSTAPAVDTGTGELLD.

Residues 16–95 (TNPGVYRFRD…IKEFAPRFNI (80 aa)) form the GIY-YIG domain. Positions 208–243 (KPYIRELTRQMNEAAECMDFETAAARRDDVGALERV) constitute a UVR domain. A disordered region spans residues 316 to 337 (LAPAASGRRRTARHGSEDVVGQ).

The protein belongs to the UvrC family. In terms of assembly, interacts with UvrB in an incision complex.

It is found in the cytoplasm. Functionally, the UvrABC repair system catalyzes the recognition and processing of DNA lesions. UvrC both incises the 5' and 3' sides of the lesion. The N-terminal half is responsible for the 3' incision and the C-terminal half is responsible for the 5' incision. The sequence is that of UvrABC system protein C from Kocuria rhizophila (strain ATCC 9341 / DSM 348 / NBRC 103217 / DC2201).